The sequence spans 215 residues: Polysialic acid O-acetyltransferase (215 aa).

Acetyl-CoA contacts are provided by residues 119–121 (DMH), arginine 148, lysine 154, serine 166, 171–172 (YK), and lysine 190.

The protein belongs to the transferase hexapeptide repeat family. In terms of assembly, homotrimer.

It catalyses the reaction [(2-&gt;6)-alpha-D-glucosyl-(1-&gt;4)-N-acetyl-alpha-D-neuraminosyl](n) + n acetyl-CoA = [(2-&gt;6)-alpha-D-glucosyl-(1-&gt;4)-N,7-O-diacetyl-alpha-D-neuraminosyl](n) + n CoA. The catalysed reaction is [(2-&gt;6)-alpha-D-glucosyl-(1-&gt;4)-N-acetyl-alpha-D-neuraminosyl](n) + n acetyl-CoA = [(2-&gt;6)-alpha-D-glucosyl-(1-&gt;4)-N,O(9)-diacetyl-alpha-D-neuraminosyl](n) + n CoA. Its function is as follows. Catalyzes the O-acetylation of capsular polymeric sialic acid consisting of polymers of (2-&gt;6)-alpha-D-glucosyl-(1-&gt;4)-N-acetyl-alpha-D-neuraminosyl residues. Shows high substrate specificity toward polymers of sialic acid that contains a large number of residues. The protein is Polysialic acid O-acetyltransferase of Neisseria meningitidis.